A 615-amino-acid polypeptide reads, in one-letter code: Protein ENHANCED DISEASE RESISTANCE 4 (615 aa).

Disordered stretches follow at residues Ile-46–Glu-271, Tyr-292–Gly-336, and Thr-549–Pro-592. Polar residues-rich tracts occupy residues Asn-63–Gly-89 and Gly-119–Glu-129. The stretch at Met-104–Glu-129 forms a coiled coil. A compositionally biased stretch (basic and acidic residues) spans Asp-134–Ser-148. A compositionally biased stretch (low complexity) spans Gly-159–Ser-168. Composition is skewed to polar residues over residues Gly-296–Tyr-314 and Ile-552–Ser-564. Positions Pro-565–Arg-577 are enriched in basic and acidic residues.

In terms of assembly, interacts with RLK902. Binds and recruits EDR1 at the powdery mildew (e.g. G.cichoracearum) penetration site on the plasma membrane. Interacts with CHC2. In terms of tissue distribution, expressed in stems and rosette leaves, and weakly in inflorescences. Not detected in roots.

It is found in the cell membrane. The protein resides in the endosome. Functionally, plays a negative role in salicylic acid (SA)-mediated resistance to powdery mildew (e.g. Golovinomyces cichoracearum). May modulate plant immunity by regulating the relocation of EDR1 by interacting with CHC2 and modulating endocytosis. The chain is Protein ENHANCED DISEASE RESISTANCE 4 from Arabidopsis thaliana (Mouse-ear cress).